The chain runs to 92 residues: Small ribosomal subunit protein bS20 (92 aa).

The protein belongs to the bacterial ribosomal protein bS20 family.

In terms of biological role, binds directly to 16S ribosomal RNA. This chain is Small ribosomal subunit protein bS20, found in Methylacidiphilum infernorum (isolate V4) (Methylokorus infernorum (strain V4)).